The following is a 542-amino-acid chain: Coiled-coil domain-containing protein 60 (542 aa).

The stretch at 70-97 (TMLQEETAFKKHQQHLKKLQEEELNKFQ) forms a coiled coil. Disordered regions lie at residues 228–284 (ATRK…EEEV) and 334–358 (QTTH…TQKK). Low complexity-rich tracts occupy residues 245–261 (SGGS…NPSS) and 342–351 (RSSTTSGESH).

The chain is Coiled-coil domain-containing protein 60 (Ccdc60) from Rattus norvegicus (Rat).